We begin with the raw amino-acid sequence, 661 residues long: Peroxisomal acyl-coenzyme A oxidase 1 (661 aa).

Residues Lys89 and Lys90 each carry the N6-succinyllysine modification. FAD is bound at residue Thr139. Lys159 is modified (N6-succinyllysine). Gly178 lines the FAD pocket. The residue at position 216 (Lys216) is an N6-acetyllysine. Position 241 is an N6-succinyllysine (Lys241). Residues Lys255, Lys267, and Lys272 each carry the N6-acetyllysine modification. Lys349 carries the N6-succinyllysine modification. Glu421 acts as the Proton acceptor in catalysis. Residues Lys437, Lys446, Lys512, and Lys637 each carry the N6-acetyllysine; alternate modification. An N6-succinyllysine; alternate mark is found at Lys437, Lys446, Lys512, and Lys637. The residue at position 643 (Lys643) is an N6-succinyllysine. Position 649 is a phosphoserine (Ser649). Lys652 is modified (N6-acetyllysine). Lys655 bears the N6-succinyllysine mark. Residues 659–661 carry the Microbody targeting signal motif; the sequence is SKL.

The protein belongs to the acyl-CoA oxidase family. In terms of assembly, homodimer. Interacts with LONP2. The cofactor is FAD.

It localises to the peroxisome. The catalysed reaction is a 2,3-saturated acyl-CoA + O2 = a (2E)-enoyl-CoA + H2O2. It catalyses the reaction hexadecanoyl-CoA + O2 = (2E)-hexadecenoyl-CoA + H2O2. The enzyme catalyses dodecanoyl-CoA + O2 = (2E)-dodecenoyl-CoA + H2O2. It carries out the reaction octanoyl-CoA + O2 = (2E)-octenoyl-CoA + H2O2. The catalysed reaction is decanoyl-CoA + O2 = (2E)-decenoyl-CoA + H2O2. It catalyses the reaction tetradecanoyl-CoA + O2 = (2E)-tetradecenoyl-CoA + H2O2. The enzyme catalyses hexadecanedioyl-CoA + O2 = (2E)-hexadecenedioyl-CoA + H2O2. It carries out the reaction tetracosanoyl-CoA + O2 = (2E)-tetracosenoyl-CoA + H2O2. The catalysed reaction is glutaryl-CoA + O2 = (2E)-glutaconyl-CoA + H2O2. It catalyses the reaction hexanoyl-CoA + O2 = (2E)-hexenoyl-CoA + H2O2. The enzyme catalyses octadecanoyl-CoA + O2 = (2E)-octadecenoyl-CoA + H2O2. It carries out the reaction (5Z,8Z,11Z,14Z,17Z)-eicosapentaenoyl-CoA + O2 = (2E,5Z,8Z,11Z,14Z,17Z)-icosahexaenoyl-CoA + H2O2. The catalysed reaction is (6Z,9Z,12Z,15Z,18Z,21Z)-tetracosahexaenoyl-CoA + O2 = (2E,6Z,9Z,12Z,15Z,18Z,21Z)-tetracosaheptaenoyl-CoA + H2O2. It participates in lipid metabolism; peroxisomal fatty acid beta-oxidation. Its function is as follows. Involved in the initial and rate-limiting step of peroxisomal beta-oxidation of straight-chain saturated and unsaturated very-long-chain fatty acids. Catalyzes the desaturation of fatty acyl-CoAs such as palmitoyl-CoA (hexadecanoyl-CoA) to 2-trans-enoyl-CoAs ((2E)-enoyl-CoAs) such as (2E)-hexadecenoyl-CoA, and donates electrons directly to molecular oxygen (O(2)), thereby producing hydrogen peroxide (H(2)O(2)). Isoform 2 shows higher activity with hexadecanoyl-CoA as substrate than isoform 1. This chain is Peroxisomal acyl-coenzyme A oxidase 1 (ACOX1), found in Phascolarctos cinereus (Koala).